The sequence spans 256 residues: Type III pantothenate kinase (256 aa).

6-13 (DVGNSHIY) serves as a coordination point for ATP. Substrate contacts are provided by residues tyrosine 99 and 106–109 (GADR). The Proton acceptor role is filled by aspartate 108. Aspartate 129 is a binding site for K(+). An ATP-binding site is contributed by threonine 132. Threonine 184 is a binding site for substrate.

The protein belongs to the type III pantothenate kinase family. Homodimer. Requires NH4(+) as cofactor. K(+) is required as a cofactor.

It is found in the cytoplasm. The catalysed reaction is (R)-pantothenate + ATP = (R)-4'-phosphopantothenate + ADP + H(+). Its pathway is cofactor biosynthesis; coenzyme A biosynthesis; CoA from (R)-pantothenate: step 1/5. Its function is as follows. Catalyzes the phosphorylation of pantothenate (Pan), the first step in CoA biosynthesis. In Legionella pneumophila (strain Paris), this protein is Type III pantothenate kinase.